Consider the following 100-residue polypeptide: MGSRFLLALFLVLLVLGCEVQAAQQLQQDDPGSPALLDKVQESISSYWDTAKAAAQDLYQKTYLTSVDEKLRDMYSKSSAAMTTYASIFTDQILTLLKGE.

The N-terminal stretch at 1–22 (MGSRFLLALFLVLLVLGCEVQA) is a signal peptide. The interval 66 to 74 (SVDEKLRDM) is lipid binding. The lipoprotein lipase cofactor stretch occupies residues 78-100 (SSAAMTTYASIFTDQILTLLKGE).

This sequence belongs to the apolipoprotein C2 family. Post-translationally, proapolipoprotein C-II is synthesized as a sialic acid containing glycoprotein which is subsequently desialylated prior to its proteolytic processing. Proapolipoprotein C-II, the major form found in plasma undergoes proteolytic cleavage of its N-terminal hexapeptide to generate the mature form apolipoprotein C-II, which occurs as the minor form in plasma.

The protein resides in the secreted. Its function is as follows. Component of chylomicrons, very low-density lipoproteins (VLDL), low-density lipoproteins (LDL), and high-density lipoproteins (HDL) in plasma. Plays an important role in lipoprotein metabolism as an activator of lipoprotein lipase. This Ellobius talpinus (Northern mole vole) protein is Apolipoprotein C-II (APOC2).